Consider the following 323-residue polypeptide: rRNA 2'-O-methyltransferase fibrillarin (323 aa).

The interval 1 to 80 is disordered; that stretch reads MSFRPGSRGG…GARGGAKGGA (80 aa). Gly residues predominate over residues 7–78; the sequence is SRGGARGGRG…RGGARGGAKG (72 aa). 16 positions are modified to asymmetric dimethylarginine: R8, R12, R15, R19, R25, R29, R35, R39, R43, R49, R53, R57, R61, R65, R69, and R73. Residues 175–176, 194–195, 219–220, and 239–242 contribute to the S-adenosyl-L-methionine site; these read TS, EF, DA, and DVAQ.

It belongs to the methyltransferase superfamily. Fibrillarin family. Component of box C/D small nucleolar ribonucleoprotein (snoRNP) particles that contain SNU13, NOP1, SIK1/NOP56 and NOP58, plus a guide RNA. In terms of processing, by homology to other fibrillarins, some or all of the N-terminal domain arginines are modified to asymmetric dimethylarginine (DMA).

The protein localises to the nucleus. It is found in the nucleolus. It carries out the reaction L-glutaminyl-[histone H2A] + S-adenosyl-L-methionine = N(5)-methyl-L-glutaminyl-[histone H2A] + S-adenosyl-L-homocysteine + H(+). Its function is as follows. S-adenosyl-L-methionine-dependent methyltransferase that has the ability to methylate both RNAs and proteins. Involved in pre-rRNA processing. Utilizes the methyl donor S-adenosyl-L-methionine to catalyze the site-specific 2'-hydroxyl methylation of ribose moieties in pre-ribosomal RNA. Site specificity is provided by a guide RNA that base pairs with the substrate. Methylation occurs at a characteristic distance from the sequence involved in base pairing with the guide RNA. Also acts as a protein methyltransferase by mediating methylation of 'Gln-105' of histone H2A (H2AQ105me), a modification that impairs binding of the FACT complex and is specifically present at 35S ribosomal DNA locus. In Candida glabrata (strain ATCC 2001 / BCRC 20586 / JCM 3761 / NBRC 0622 / NRRL Y-65 / CBS 138) (Yeast), this protein is rRNA 2'-O-methyltransferase fibrillarin (NOP1).